The following is a 913-amino-acid chain: WD repeat-containing protein 44 (913 aa).

Positions 1–14 (MASESDTEEFYDAP) are enriched in acidic residues. Residues 1–24 (MASESDTEEFYDAPEDVHLGGGYP) form a disordered region. At alanine 2 the chain carries N-acetylalanine. The binding activity stretch occupies residues 2 to 170 (ASESDTEEFY…SSTEQLNVLE (169 aa)). The residue at position 3 (serine 3) is a Phosphoserine. The FFAT-like motif signature appears at 9 to 15 (EFYDAPE). A Phosphotyrosine modification is found at tyrosine 11. Serine 27, serine 50, serine 66, serine 71, serine 81, serine 96, and serine 126 each carry phosphoserine. A coiled-coil region spans residues 119-184 (EESQKAESQN…VLNKEAVEVK (66 aa)). A phosphothreonine mark is found at threonine 158 and threonine 219. Residues 205–348 (AVEEVAPAKP…RPRSNSGREL (144 aa)) form a disordered region. The important for interaction with ARHGAP26 AND ARHGAP10 stretch occupies residues 211–257 (PAKPPRHLTPEPDIVASTKKPVPARPPPPTNFPPPRPPPPSRPAPPP). Residues 233 to 256 (PARPPPPTNFPPPRPPPPSRPAPP) show a composition bias toward pro residues. Serine 262 carries the post-translational modification Phosphoserine. Residues 262 to 278 (SELEFETLKTPDIDVPK) are compositionally biased toward basic and acidic residues. Threonine 271 is modified (phosphothreonine). A compositionally biased stretch (polar residues) spans 280–311 (NITSDSLLTASMASESTVKDSQPSLDLASATS). Residues 334 to 347 (VMGPQRPRSNSGRE) are important for interaction with RAB11A. Phosphoserine; by PKB/AKT1 occurs at positions 342 and 344. Threonine 349 carries the post-translational modification Phosphothreonine. 2 disordered regions span residues 397–424 (SNDAAQSDDEEKLQSQPTDTDGGRLKQK) and 459–480 (DEVFHTDQDDPSSSDDEGMPYT). 4 positions are modified to phosphoserine: serine 403, serine 470, serine 471, and serine 472. Residues 467 to 476 (DDPSSSDDEG) show a composition bias toward acidic residues. The residue at position 479 (tyrosine 479) is a Phosphotyrosine. One copy of the WD 1 repeat lies at 509 to 548 (EHMGAVWTMKFSHCGRLLASAGQDNVVRIWALKNAFDYFN). The tract at residues 557 to 593 (EGRVSPSPSQESLSSSKSDTDTGVCSGTDEDPDDKNA) is disordered. Phosphoserine is present on residues serine 561 and serine 565. A compositionally biased stretch (low complexity) spans 561–573 (SPSPSQESLSSSK). WD repeat units follow at residues 605–643 (GHTADLLDLSWSKNYFLLSSSMDKTVRLWHISRRECLCC), 645–685 (QHID…VALW), 690–729 (GQTKLITAANFCQNGKYAVIGTYDGRCIFYDTEHLKYHTQ), 740–779 (KVGRKITGIEPLPGENKILVTSNDSRIRLYDLRDLSLSMK), 784–823 (VNSSSQIKASFSHDFTYLVSGSEDKYVYIWSTYHDLSKFT), and 876–913 (VLDATPSGIMKTDNTEVLLSADFTGAIKVFVNKRKNVS).

In terms of assembly, interacts with the GTP-bound form of RAB11A and RAB11B. Interacts with GRAF1/ARHGAP26 or GRAF2/ARHGAP10; the interaction connects the endoplasmic reticulum (ER) with the endosomal tubule. Interacts (via FFAT-like motif) with VAPA (via MSP domain) or VAPB (via MSP domain); the interaction connects the ER with the endosomal tubule. Does not bind to RAB7, RAB10, RAB14, RAB35 and RAB8A. In terms of processing, phosphorylated by ATK1; the phosphorylation stabilizes its interaction with RAB11A and RAB11B.

It localises to the cytoplasm. The protein localises to the cytosol. Its subcellular location is the perinuclear region. It is found in the endosome membrane. The protein resides in the golgi apparatus. It localises to the trans-Golgi network. Its function is as follows. Downstream effector for Rab11 which regulates Rab11 intracellular membrane trafficking functions such as endocytic recycling, intracellular ciliogenesis and protein export. ATK1-mediated phosphorylation of WDR44 induces binding to Rab11 which activates endocytic recycling of transferrin receptor back to the plasma membrane. When bound to Rab11, prevents the formation of the ciliogenic Rab11-Rabin8/RAB3IP-RAB11FIP3 complex, therefore inhibiting preciliary trafficking and ciliogenesis. Participates in neo-synthesized protein export by connecting the endoplasmic reticulum (ER) with the endosomal tubule via direct interactions with the integral ER proteins VAPA or VAPB and the endosomal protein GRAFs (GRAF1/ARHGAP26 or GRAF2/ARHGAP10), which facilitates the transfer of proteins such as E-cadherin, MPP14 and CFTR into a Rab8-Rab10-Rab11-dependent export route. The chain is WD repeat-containing protein 44 from Homo sapiens (Human).